A 68-amino-acid chain; its full sequence is DNA-directed RNA polymerase subunit omega (68 aa).

This sequence belongs to the RNA polymerase subunit omega family. In terms of assembly, the RNAP catalytic core consists of 2 alpha, 1 beta, 1 beta' and 1 omega subunit. When a sigma factor is associated with the core the holoenzyme is formed, which can initiate transcription.

The catalysed reaction is RNA(n) + a ribonucleoside 5'-triphosphate = RNA(n+1) + diphosphate. Its function is as follows. Promotes RNA polymerase assembly. Latches the N- and C-terminal regions of the beta' subunit thereby facilitating its interaction with the beta and alpha subunits. The chain is DNA-directed RNA polymerase subunit omega from Listeria monocytogenes serotype 4b (strain CLIP80459).